We begin with the raw amino-acid sequence, 479 residues long: Chromosomal replication initiator protein DnaA (479 aa).

Residues 1–74 (MFSGVVMAWQ…RSLTGVDSSI (74 aa)) are domain I, interacts with DnaA modulators. The domain II stretch occupies residues 74–142 (ITDVRFLEKK…SVPKNNASIR (69 aa)). A domain III, AAA+ region region spans residues 143 to 360 (ALHPRYTFDE…SAITAIGARA (218 aa)). Positions 187, 189, 190, and 191 each coordinate ATP. The domain IV, binds dsDNA stretch occupies residues 361–479 (RLMGGYIDMN…NLLSDKVKQI (119 aa)).

Belongs to the DnaA family. In terms of assembly, oligomerizes as a right-handed, spiral filament on DNA at oriC.

It is found in the cytoplasm. Its function is as follows. Plays an essential role in the initiation and regulation of chromosomal replication. ATP-DnaA binds to the origin of replication (oriC) to initiate formation of the DNA replication initiation complex once per cell cycle. Binds the DnaA box (a 9 base pair repeat at the origin) and separates the double-stranded (ds)DNA. Forms a right-handed helical filament on oriC DNA; dsDNA binds to the exterior of the filament while single-stranded (ss)DNA is stabiized in the filament's interior. The ATP-DnaA-oriC complex binds and stabilizes one strand of the AT-rich DNA unwinding element (DUE), permitting loading of DNA polymerase. After initiation quickly degrades to an ADP-DnaA complex that is not apt for DNA replication. Binds acidic phospholipids. The chain is Chromosomal replication initiator protein DnaA from Desulfotalea psychrophila (strain LSv54 / DSM 12343).